The chain runs to 218 residues: Oxygen regulatory protein NreC (218 aa).

Residues 2–119 (KIVIADDHAV…QLILAVRTVY (118 aa)) enclose the Response regulatory domain. 4-aspartylphosphate is present on Asp-53. An HTH luxR-type domain is found at 149–214 (SSDPFKILSK…ELVEYALKKK (66 aa)). Residues 173-192 (NKDIAEKLFVSVKTVEAHKT) constitute a DNA-binding region (H-T-H motif).

Post-translationally, phosphorylated by NreB.

The protein localises to the cytoplasm. In terms of biological role, member of the two-component regulatory system NreB/NreC involved in the control of dissimilatory nitrate/nitrite reduction in response to oxygen. Phosphorylated NreC binds to a GC-rich palindromic sequence at the promoters of the nitrate (narGHJI) and nitrite (nir) reductase operons, as well as the putative nitrate transporter gene narT, and activates their expression. The sequence is that of Oxygen regulatory protein NreC (nreC) from Staphylococcus epidermidis (strain ATCC 12228 / FDA PCI 1200).